A 309-amino-acid polypeptide reads, in one-letter code: HPr kinase/phosphorylase (309 aa).

Active-site residues include H138 and K159. Residue 153-160 (GDSGIGKS) participates in ATP binding. S160 serves as a coordination point for Mg(2+). The Proton acceptor; for phosphorylation activity. Proton donor; for dephosphorylation activity role is filled by D177. The important for the catalytic mechanism of both phosphorylation and dephosphorylation stretch occupies residues 201–210 (LEIRGVGIID). E202 contacts Mg(2+). R243 is a catalytic residue. The tract at residues 264 to 269 (PVKTGR) is important for the catalytic mechanism of dephosphorylation.

It belongs to the HPrK/P family. As to quaternary structure, homohexamer. Mg(2+) serves as cofactor.

It carries out the reaction [HPr protein]-L-serine + ATP = [HPr protein]-O-phospho-L-serine + ADP + H(+). The catalysed reaction is [HPr protein]-O-phospho-L-serine + phosphate + H(+) = [HPr protein]-L-serine + diphosphate. Its function is as follows. Catalyzes the ATP- as well as the pyrophosphate-dependent phosphorylation of a specific serine residue in HPr, a phosphocarrier protein of the phosphoenolpyruvate-dependent sugar phosphotransferase system (PTS). HprK/P also catalyzes the pyrophosphate-producing, inorganic phosphate-dependent dephosphorylation (phosphorolysis) of seryl-phosphorylated HPr (P-Ser-HPr). The two antagonistic activities of HprK/P are regulated by several intracellular metabolites, which change their concentration in response to the absence or presence of rapidly metabolisable carbon sources (glucose, fructose, etc.) in the growth medium. Therefore, by controlling the phosphorylation state of HPr, HPrK/P is a sensor enzyme that plays a major role in the regulation of carbon metabolism and sugar transport: it mediates carbon catabolite repression (CCR), and regulates PTS-catalyzed carbohydrate uptake and inducer exclusion. The chain is HPr kinase/phosphorylase from Streptococcus thermophilus (strain ATCC BAA-250 / LMG 18311).